Consider the following 511-residue polypeptide: Immunoglobulin-binding protein EibD (511 aa).

Residues 1-26 (MSKKFTMTLLSSSLAGLLVMSGGVSA) form the signal peptide. The surface exposed passenger domain stretch occupies residues 27 to 417 (QNGTYSVLQD…SKAIAANTRT (391 aa)). Over 27–460 (QNGTYSVLQD…GLFQPYSVGK (434 aa)) the chain is Extracellular. The interval 161–287 (DAKASGEFSV…TGTESDKTYG (127 aa)) is head domain. The interval 288-303 (TRVLGGLSDGTRNSDA) is neck. The segment at 304–349 (ATVGQLNRKVGGVYDDVKARITVESEKQKKYTDQKTSEVNEKVEAR) is right-handed coiled-coil (RHcc). A coiled-coil region spans residues 304-349 (ATVGQLNRKVGGVYDDVKARITVESEKQKKYTDQKTSEVNEKVEAR). A required to bind IgA region spans residues 329-344 (EKQKKYTDQKTSEVNE). The saddle domain stretch occupies residues 350–375 (TTVGVDSDGKLTRAEGATKTIAVNDG). Residues 376–441 (LVALSGRTDR…INENHKEMKR (66 aa)) are a coiled coil. The left-handed coiled-coil (LHcc) stretch occupies residues 376–441 (LVALSGRTDR…INENHKEMKR (66 aa)). The segment at 384–418 (DRIDYAVGAIDGRVTRNTQSIEKNSKAIAANTRTL) is required to bind IgG. Positions 418–460 (LQQHSARLDSQQRQINENHKEMKRAAAQSAALTGLFQPYSVGK) are outer membrane translocation of the passenger domain. The next 4 beta stranded transmembrane spans lie at 461–471 (FNATAAVGGYS), 474–485 (QALAVGVGYRFN), 488–497 (TAAKAGVAFS), and 501–511 (ASWNVGVNFEF). A translocator domain region spans residues 461-511 (FNATAAVGGYSDQQALAVGVGYRFNEQTAAKAGVAFSDGDASWNVGVNFEF).

Belongs to the autotransporter-2 (AT-2) (TC 1.B.40) family. Eib subfamily. Homotrimer; can probably form mixed heterotrimers in vivo. Will form mixed heterotrimers with EibA or EibC; these are correctly located in the outer membrane and bind IgG Fc, although less well than homotrimers. In denaturing gels runs as a band of about 210 kDa. Binds the Fc portion of immunoglobulins; binds more than 1 Fc per subunit, can be modeled to bind 3 Fc per trimer.

It is found in the cell surface. It localises to the cell outer membrane. In terms of biological role, binds (in a non-immune fashion) to the Fc portion of human IgA and IgG; binding occurs on the cell surface. Confers the ability to survive exposure to human serum exposure. Binds to the Fc portion of human IgG, IgA and to whole mouse antibodies also via Fc. Upon overexpression cells acquire an extra cell surface layer that forms a zipper-like contact between cells; cells autoagglutinate and form biofilm more readily, suggesting it may play a role in defense against a host. This chain is Immunoglobulin-binding protein EibD, found in Escherichia coli.